We begin with the raw amino-acid sequence, 218 residues long: Putative NAD(P)H nitroreductase SH0546 (218 aa).

Belongs to the nitroreductase family. FMN serves as cofactor.

This Staphylococcus haemolyticus (strain JCSC1435) protein is Putative NAD(P)H nitroreductase SH0546.